Reading from the N-terminus, the 539-residue chain is Membrane protein insertase YidC (539 aa).

5 helical membrane-spanning segments follow: residues 6–26 (TLLVLLLALVSFLLFQQWQVA), 341–361 (SVIQSFVGNWGVAIICLTFIV), 416–436 (LGGCLPLILQMPIFIALYWAL), 454–474 (LSAQDPYFILPLLMGGSMFLI), and 495–515 (PVMFTFFFLWFPSGLVLYWLV).

This sequence belongs to the OXA1/ALB3/YidC family. Type 1 subfamily. In terms of assembly, interacts with the Sec translocase complex via SecD. Specifically interacts with transmembrane segments of nascent integral membrane proteins during membrane integration.

The protein localises to the cell inner membrane. Required for the insertion and/or proper folding and/or complex formation of integral membrane proteins into the membrane. Involved in integration of membrane proteins that insert both dependently and independently of the Sec translocase complex, as well as at least some lipoproteins. Aids folding of multispanning membrane proteins. The protein is Membrane protein insertase YidC of Vibrio vulnificus (strain YJ016).